Reading from the N-terminus, the 498-residue chain is O-methyltransferase OME1 (498 aa).

Over residues Met-1–Ala-19 the composition is skewed to polar residues. Disordered regions lie at residues Met-1–Gly-23 and His-42–Tyr-83. The span at Ser-50 to Ser-65 shows a compositional bias: low complexity. Asp-358 serves as a coordination point for S-adenosyl-L-methionine. His-406 (proton acceptor) is an active-site residue.

Belongs to the class I-like SAM-binding methyltransferase superfamily. Cation-independent O-methyltransferase family.

The protein operates within secondary metabolite biosynthesis. In terms of biological role, O-methyltransferase; part of the gene cluster that mediates the biosynthesis of a tyrosine-derived cytochalasan acting as a fungal signal recognized by resistant rice plants and leads to avirulence in Pi33 resistant rice cultivars. The first step in the pathway is catalyzed by the hybrid PKS-NRPS ACE1, assisted by the enoyl reductase RAP1, that are responsible for fusion of the tyrosine precursor and the polyketide backbone. The polyketide synthase module (PKS) of ACE1 is responsible for the synthesis of the polyketide backbone and the downstream nonribosomal peptide synthetase (NRPS) amidates the carboxyl end of the polyketide with the tyrosine precursor. Because ACE1 lacks a designated enoylreductase (ER) domain, the required activity is provided the enoyl reductase RAP1. Reduction by the hydrolyase ORFZ, followed by dehydration and intra-molecular Diels-Alder cyclization by the Diels-Alderase ORF3 then yield the required isoindolone-fused macrocycle. A number of oxidative steps catalyzed by the tailoring enzymes identified within the cluster, including cytochrome P450 monooxygenases CYP1 to CYP4, the FAD-linked oxidoreductase OXR2 and the short-chain dehydrogenase/reductase OXR1, are further required to afford the final cytochalasans that confer avirulence and which have still to be identified. The monooxygenase CYP1 has been shown to be a site-selective C-18 hydroxylase whereas the function of CYP3 is the site-selective epoxidation of the C-6/C-7 olefin that is present in some intermediate compounds. Finally, SYN2 and RAP2 are not required for avirulence in Pi33 resistant rice cultivars. This chain is O-methyltransferase OME1, found in Pyricularia oryzae (strain 70-15 / ATCC MYA-4617 / FGSC 8958) (Rice blast fungus).